The primary structure comprises 406 residues: Acetamidase (406 aa).

The span at 387 to 399 shows a compositional bias: low complexity; sequence CRPRSSTSTSPRR. The segment at 387–406 is disordered; it reads CRPRSSTSTSPRRQGPAEGR.

The protein belongs to the acetamidase/formamidase family.

The enzyme catalyses a monocarboxylic acid amide + H2O = a monocarboxylate + NH4(+). It carries out the reaction acetamide + H2O = acetate + NH4(+). Allows acetamide to be used as a sole carbon or nitrogen source. The protein is Acetamidase (amdA) of Mycolicibacterium smegmatis (Mycobacterium smegmatis).